A 713-amino-acid chain; its full sequence is BBSome complex assembly protein BBS10 (713 aa).

Belongs to the TCP-1 chaperonin family. In terms of assembly, component of a complex composed at least of MKKS, BBS10, BBS12, TCP1, CCT2, CCT3, CCT4, CCT5 and CCT8.

The protein localises to the cell projection. The protein resides in the cilium. In terms of biological role, probable molecular chaperone that assists the folding of proteins upon ATP hydrolysis. Plays a role in the assembly of BBSome, a complex involved in ciliogenesis regulating transports vesicles to the cilia. Involved in adipogenic differentiation. In Mus musculus (Mouse), this protein is BBSome complex assembly protein BBS10 (Bbs10).